Reading from the N-terminus, the 509-residue chain is Autophagy-related protein 16 (509 aa).

WD repeat units lie at residues 223–262, 265–304, 307–347, 349–388, 391–430, 437–478, and 480–509; these read AHEG…LIKS, GSLG…VRHT, GHTD…CTNT, LFTS…LLSE, GHSS…ICGT, RLAS…SILK, and QTSP…CTWT.

This sequence belongs to the WD repeat ATG16 family.

May play a role in autophagy. The chain is Autophagy-related protein 16 from Arabidopsis thaliana (Mouse-ear cress).